The primary structure comprises 384 residues: S-adenosylmethionine synthase (384 aa).

His-15 contacts ATP. Asp-17 contributes to the Mg(2+) binding site. Glu-43 contributes to the K(+) binding site. Positions 56 and 99 each coordinate L-methionine. The tract at residues 99–109 (QSADINQGVDR) is flexible loop. ATP contacts are provided by residues 164 to 166 (DAK), 230 to 231 (RF), Asp-239, 245 to 246 (RK), Ala-262, and Lys-266. Asp-239 serves as a coordination point for L-methionine. Lys-270 contacts L-methionine.

This sequence belongs to the AdoMet synthase family. As to quaternary structure, homotetramer; dimer of dimers. The cofactor is Mg(2+). Requires K(+) as cofactor.

It localises to the cytoplasm. The catalysed reaction is L-methionine + ATP + H2O = S-adenosyl-L-methionine + phosphate + diphosphate. The protein operates within amino-acid biosynthesis; S-adenosyl-L-methionine biosynthesis; S-adenosyl-L-methionine from L-methionine: step 1/1. Functionally, catalyzes the formation of S-adenosylmethionine (AdoMet) from methionine and ATP. The overall synthetic reaction is composed of two sequential steps, AdoMet formation and the subsequent tripolyphosphate hydrolysis which occurs prior to release of AdoMet from the enzyme. This chain is S-adenosylmethionine synthase, found in Haemophilus influenzae (strain 86-028NP).